The following is a 41-amino-acid chain: Large ribosomal subunit protein bL36 (41 aa).

Belongs to the bacterial ribosomal protein bL36 family.

The sequence is that of Large ribosomal subunit protein bL36 from Beijerinckia indica subsp. indica (strain ATCC 9039 / DSM 1715 / NCIMB 8712).